A 633-amino-acid polypeptide reads, in one-letter code: Rab11 family-interacting protein 4 (633 aa).

EF-hand domains lie at 17–52 and 50–85; these read LFLQ…FAQG and AQGD…MKGC. Ca(2+)-binding residues include D30, D32, D34, D63, N65, R69, and D74. Disordered stretches follow at residues 152–182 and 218–257; these read SDLD…LGSL and GEGE…QTPR. Residues 238–254 are compositionally biased toward polar residues; sequence TNALSDLGSSVPSSAGQ. Residues 410-613 adopt a coiled-coil conformation; it reads AREKGTEIVL…EEINYRLRQY (204 aa). The FIP-RBD domain occupies 570–632; that stretch reads EAKSLFSTQT…DHNPSILEIK (63 aa).

Homodimer. Forms a complex with Rab11 (rab11a or rab11b) and arf6.

It localises to the recycling endosome membrane. Its subcellular location is the cleavage furrow. It is found in the midbody. The protein localises to the cytoplasmic vesicle. Acts as a regulator of endocytic traffic by participating in membrane delivery. Required for the abscission step in cytokinesis, possibly by acting as an 'address tag' delivering recycling endosome membranes to the cleavage furrow during late cytokinesis. The protein is Rab11 family-interacting protein 4 (rab11fip4) of Xenopus tropicalis (Western clawed frog).